Consider the following 219-residue polypeptide: MTQDEMKKAAGWAALEYVTKGSIVGVGTGSTVNHFIDALETRKEEIKGAVSSSVASTERLEKLGIPVFEANEVAGLDIYVDGADEINAEYDMIKGGGAALTREKIVAAISDKFICIVDDTKQVDVLGQFPLPVEVIPMARSFIGRELVKLGGDPEYREGVVTDNGNIIIDVHNMAITDAKDMEKKINALPGVVTVGLFAARGADVLLVGAPEGVRKFEK.

Residues 28–31 (TGST), 81–84 (DGAD), and 94–97 (KGGG) each bind substrate. The active-site Proton acceptor is the glutamate 103. Lysine 121 contributes to the substrate binding site.

Belongs to the ribose 5-phosphate isomerase family. In terms of assembly, homodimer.

The enzyme catalyses aldehydo-D-ribose 5-phosphate = D-ribulose 5-phosphate. It participates in carbohydrate degradation; pentose phosphate pathway; D-ribose 5-phosphate from D-ribulose 5-phosphate (non-oxidative stage): step 1/1. In terms of biological role, catalyzes the reversible conversion of ribose-5-phosphate to ribulose 5-phosphate. The sequence is that of Ribose-5-phosphate isomerase A from Photobacterium profundum (strain SS9).